The chain runs to 665 residues: Potassium-transporting ATPase ATP-binding subunit (665 aa).

A run of 4 helical transmembrane segments spans residues 28–48 (MFLT…PGFF), 56–76 (YLQF…FSSM), 207–227 (IALT…TASI), and 244–264 (IVLL…AIGI). The active-site 4-aspartylphosphate intermediate is the Asp295. ATP-binding positions include Asp332, Glu336, 364 to 371 (FSSETKYS), and Lys382. The Mg(2+) site is built by Asp501 and Asp505. 3 helical membrane-spanning segments follow: residues 570–590 (YFVI…VNVL), 596–616 (IVAV…LIPL), and 644–664 (VVVP…LGVV).

The protein belongs to the cation transport ATPase (P-type) (TC 3.A.3) family. Type IA subfamily. The system is composed of three essential subunits: KdpA, KdpB and KdpC.

The protein resides in the cell membrane. It catalyses the reaction K(+)(out) + ATP + H2O = K(+)(in) + ADP + phosphate + H(+). Its function is as follows. Part of the high-affinity ATP-driven potassium transport (or Kdp) system, which catalyzes the hydrolysis of ATP coupled with the electrogenic transport of potassium into the cytoplasm. This subunit is responsible for energy coupling to the transport system and for the release of the potassium ions to the cytoplasm. This is Potassium-transporting ATPase ATP-binding subunit from Thermoplasma acidophilum (strain ATCC 25905 / DSM 1728 / JCM 9062 / NBRC 15155 / AMRC-C165).